A 167-amino-acid polypeptide reads, in one-letter code: Pathogenesis-related protein PR-1 type (167 aa).

A signal peptide spans 1-29; it reads MAHNHWCNLFSVALVCVVALVMVQYSVAQ. The SCP domain maps to 36-155; that stretch reads VDAHNAARSA…NGAWFITCNY (120 aa). 3 cysteine pairs are disulfide-bonded: cysteine 72–cysteine 144, cysteine 117–cysteine 123, and cysteine 139–cysteine 153.

It belongs to the CRISP family.

Its function is as follows. Probably involved in the defense reaction of plants against pathogens. The protein is Pathogenesis-related protein PR-1 type of Sambucus nigra (European elder).